The primary structure comprises 244 residues: Dehydration-responsive element-binding protein 2E (244 aa).

Positions 1–25 (MEKEDNGSKQSSSASVVSSRRRRRV) are disordered. A Nuclear localization signal motif is present at residues 20-46 (RRRRRVVEPVEATLQRWEEEGLARARR). Residues 69-134 (RFRGVRQRVW…YGPYARLNFP (66 aa)) constitute a DNA-binding region (AP2/ERF).

This sequence belongs to the AP2/ERF transcription factor family. ERF subfamily. As to expression, expressed in xylem tissues, stigma, anthers and region where sepals and petals attach the peduncle.

It localises to the nucleus. Its function is as follows. Transcriptional activator that binds specifically to the DNA sequence 5'-[AG]CCGAC-3'. Binding to the C-repeat/DRE element mediates abscisic acid-inducible transcription. Involved in the regulation of plant development and tolerance to abiotic stresses. The sequence is that of Dehydration-responsive element-binding protein 2E (DREB2E) from Arabidopsis thaliana (Mouse-ear cress).